A 416-amino-acid polypeptide reads, in one-letter code: Prostate tumor-overexpressed gene 1 protein (416 aa).

The disordered stretch occupies residues 1–53 (MVRPRRAPYRSGAGGPLGGRGRPPRPLVVRAVRSRSWPASPRGPQPPRIRARS). The segment covering 12–21 (GAGGPLGGRG) has biased composition (gly residues). Residues 27–36 (LVVRAVRSRS) show a composition bias toward low complexity. S53 carries the post-translational modification Phosphoserine. Positions 184 to 416 (NGFAGCMLFP…QEQQQRGMGG (233 aa)) are interaction with FLOT1.

It belongs to the Mediator complex subunit 25 family. PTOV1 subfamily. As to quaternary structure, may interact with CREBBP. Interacts with FLOT1. Post-translationally, ubiquitinated by the CRL2(KLHDC2) complex, which recognizes the diglycine (Gly-Gly) at the C-terminus, leading to its degradation. Ubiquitinated by the CRL2(APPBP2) complex, which recognizes the Arg-Xaa-Xaa-Gly sequence at the C-terminus, leading to its degradation. In terms of tissue distribution, expressed in brain, heart, kidney, liver, placenta, skeletal muscle and small intestine.

The protein resides in the cytoplasm. It localises to the nucleus. Its subcellular location is the cell membrane. The protein localises to the perinuclear region. May activate transcription. Required for nuclear translocation of FLOT1. Promotes cell proliferation. The chain is Prostate tumor-overexpressed gene 1 protein (PTOV1) from Homo sapiens (Human).